A 745-amino-acid chain; its full sequence is Cellulose synthase-like protein E2 (745 aa).

Residues 1 to 14 are compositionally biased toward gly residues; the sequence is MAGSGGGVVSGGRQ. The segment at 1–20 is disordered; sequence MAGSGGGVVSGGRQRGPPLF. A run of 2 helical transmembrane segments spans residues 29 to 49 and 66 to 86; these read AMAA…LIWL and WAWL…VLTL. Active-site residues include Asp-155 and Asp-458. Helical transmembrane passes span 541-561, 568-588, 658-678, 686-706, and 723-743; these read FPTL…ISLF, WFIP…AESL, AMFV…VLGI, GPGG…IVAI, and LPAS…ILSI.

This sequence belongs to the glycosyltransferase 2 family. Plant cellulose synthase-like E subfamily.

It is found in the golgi apparatus membrane. In terms of biological role, thought to be a Golgi-localized beta-glycan synthase that polymerize the backbones of noncellulosic polysaccharides (hemicelluloses) of plant cell wall. This is Cellulose synthase-like protein E2 (CSLE2) from Oryza sativa subsp. japonica (Rice).